A 72-amino-acid chain; its full sequence is Translation initiation factor IF-1 (72 aa).

Residues 1–72 enclose the S1-like domain; sequence MSKEEAIEVE…TRGRITYRAK (72 aa).

The protein belongs to the IF-1 family. Component of the 30S ribosomal translation pre-initiation complex which assembles on the 30S ribosome in the order IF-2 and IF-3, IF-1 and N-formylmethionyl-tRNA(fMet); mRNA recruitment can occur at any time during PIC assembly.

It localises to the cytoplasm. Functionally, one of the essential components for the initiation of protein synthesis. Stabilizes the binding of IF-2 and IF-3 on the 30S subunit to which N-formylmethionyl-tRNA(fMet) subsequently binds. Helps modulate mRNA selection, yielding the 30S pre-initiation complex (PIC). Upon addition of the 50S ribosomal subunit IF-1, IF-2 and IF-3 are released leaving the mature 70S translation initiation complex. The chain is Translation initiation factor IF-1 from Geotalea uraniireducens (strain Rf4) (Geobacter uraniireducens).